The sequence spans 227 residues: 2-C-methyl-D-erythritol 4-phosphate cytidylyltransferase (227 aa).

The protein belongs to the IspD/TarI cytidylyltransferase family. IspD subfamily.

It catalyses the reaction 2-C-methyl-D-erythritol 4-phosphate + CTP + H(+) = 4-CDP-2-C-methyl-D-erythritol + diphosphate. Its pathway is isoprenoid biosynthesis; isopentenyl diphosphate biosynthesis via DXP pathway; isopentenyl diphosphate from 1-deoxy-D-xylulose 5-phosphate: step 2/6. In terms of biological role, catalyzes the formation of 4-diphosphocytidyl-2-C-methyl-D-erythritol from CTP and 2-C-methyl-D-erythritol 4-phosphate (MEP). The protein is 2-C-methyl-D-erythritol 4-phosphate cytidylyltransferase of Bordetella bronchiseptica (strain ATCC BAA-588 / NCTC 13252 / RB50) (Alcaligenes bronchisepticus).